The sequence spans 321 residues: Probable 2-oxoglutarate-dependent dioxygenase AOP1.2 (321 aa).

The region spanning 165–270 (TYYLTRLMKY…RYSTGLFSIP (106 aa)) is the Fe2OG dioxygenase domain. Residues His194, Asp196, and His251 each coordinate Fe cation. Residue Arg261 participates in 2-oxoglutarate binding.

Belongs to the iron/ascorbate-dependent oxidoreductase family. Fe(2+) is required as a cofactor.

In terms of biological role, probable 2-oxoglutarate-dependent dioxygenase that may be involved in glucosinolates biosynthesis. May play a role in the production of aliphatic glucosinolates. The protein is Probable 2-oxoglutarate-dependent dioxygenase AOP1.2 (AOP1.2) of Arabidopsis thaliana (Mouse-ear cress).